Consider the following 155-residue polypeptide: Ribosome maturation factor RimP (155 aa).

This sequence belongs to the RimP family.

The protein resides in the cytoplasm. Functionally, required for maturation of 30S ribosomal subunits. The chain is Ribosome maturation factor RimP from Prochlorococcus marinus (strain MIT 9211).